The sequence spans 352 residues: Ion-translocating oxidoreductase complex subunit D (352 aa).

A run of 5 helical transmembrane segments spans residues 20-40 (IMLL…WFFG), 42-62 (GTLV…ALVL), 78-109 (ALLT…VIIA), 123-143 (PAMI…TSWL), and 148-168 (IAVN…GHTA). Residue T187 is modified to FMN phosphoryl threonine. 5 helical membrane passes run 214–234 (ILAG…GVWL), 242–262 (WHIP…GWLF), 267–287 (LAAP…FFIL), 301–321 (LIFG…GGYP), and 322–342 (DGVA…DYYT).

The protein belongs to the NqrB/RnfD family. As to quaternary structure, the complex is composed of six subunits: RsxA, RsxB, RsxC, RsxD, RsxE and RsxG. FMN serves as cofactor.

The protein resides in the cell inner membrane. Its function is as follows. Part of a membrane-bound complex that couples electron transfer with translocation of ions across the membrane. Required to maintain the reduced state of SoxR. The protein is Ion-translocating oxidoreductase complex subunit D of Escherichia coli O6:H1 (strain CFT073 / ATCC 700928 / UPEC).